The sequence spans 472 residues: Violaxanthin de-epoxidase, chloroplastic (472 aa).

Intrachain disulfides connect Cys133-Cys151, Cys138-Cys145, Cys157-Cys174, Cys161-Cys170, Cys189-Cys196, and Cys242-Cys372. The stretch at 379–462 (VERLEKTVEE…MEAGEVEKLF (84 aa)) forms a coiled coil.

Belongs to the calycin superfamily. Lipocalin family. Disulfide bonds. Reduction of the disulfides results in loss of a rigid structure, a decrease in thermal stability of 15 degrees Celsius and a loss of activity.

The protein resides in the plastid. The protein localises to the chloroplast thylakoid membrane. It catalyses the reaction all-trans-violaxanthin + 2 L-ascorbate = all-trans-zeaxanthin + 2 L-dehydroascorbate + 2 H2O. Irreversibly inhibited by DTT and iodoacetamide at pH 5.7 or pH 5.2, but not at pH 7.2. Regulated through Ca(2+) gating of H(+) flux at the CFoH(+) channel. Requires the presence of lipids forming reverse hexagonal structures such as monogalactosyldiacylglyceride (MGDG) or phosphatidylethanolamine. A negative curvature elastic stress in the thylakoid lipid bilayer is required for VDE1 activity. Part of the xanthophyll (or violaxanthin) cycle for controlling the concentration of zeaxanthin in chloroplasts. Catalyzes the two-step mono de-epoxidation reaction. Stereospecific for all-trans xanthophylls. Zeaxanthin induces the dissipation of excitation energy in the chlorophyll of the light-harvesting protein complex of photosystem II. This Spinacia oleracea (Spinach) protein is Violaxanthin de-epoxidase, chloroplastic.